A 265-amino-acid chain; its full sequence is Imidazole glycerol phosphate synthase subunit HisF (265 aa).

Residues aspartate 11 and aspartate 130 contribute to the active site.

Belongs to the HisA/HisF family. In terms of assembly, heterodimer of HisH and HisF.

It localises to the cytoplasm. The catalysed reaction is 5-[(5-phospho-1-deoxy-D-ribulos-1-ylimino)methylamino]-1-(5-phospho-beta-D-ribosyl)imidazole-4-carboxamide + L-glutamine = D-erythro-1-(imidazol-4-yl)glycerol 3-phosphate + 5-amino-1-(5-phospho-beta-D-ribosyl)imidazole-4-carboxamide + L-glutamate + H(+). It participates in amino-acid biosynthesis; L-histidine biosynthesis; L-histidine from 5-phospho-alpha-D-ribose 1-diphosphate: step 5/9. Functionally, IGPS catalyzes the conversion of PRFAR and glutamine to IGP, AICAR and glutamate. The HisF subunit catalyzes the cyclization activity that produces IGP and AICAR from PRFAR using the ammonia provided by the HisH subunit. The protein is Imidazole glycerol phosphate synthase subunit HisF of Idiomarina loihiensis (strain ATCC BAA-735 / DSM 15497 / L2-TR).